The primary structure comprises 211 residues: FMN-dependent NADH:quinone oxidoreductase (211 aa).

17-19 contacts FMN; that stretch reads SYS.

The protein belongs to the azoreductase type 1 family. Homodimer. FMN serves as cofactor.

It catalyses the reaction 2 a quinone + NADH + H(+) = 2 a 1,4-benzosemiquinone + NAD(+). The catalysed reaction is N,N-dimethyl-1,4-phenylenediamine + anthranilate + 2 NAD(+) = 2-(4-dimethylaminophenyl)diazenylbenzoate + 2 NADH + 2 H(+). Its function is as follows. Quinone reductase that provides resistance to thiol-specific stress caused by electrophilic quinones. Functionally, also exhibits azoreductase activity. Catalyzes the reductive cleavage of the azo bond in aromatic azo compounds to the corresponding amines. The polypeptide is FMN-dependent NADH:quinone oxidoreductase (Bacillus velezensis (strain DSM 23117 / BGSC 10A6 / LMG 26770 / FZB42) (Bacillus amyloliquefaciens subsp. plantarum)).